Reading from the N-terminus, the 584-residue chain is POTE ankyrin domain family member D (584 aa).

ANK repeat units lie at residues 172 to 201 (EKRT…QLNV), 205 to 234 (KKRT…DRNI), 238 to 267 (YGNT…DIES), 271 to 300 (CGLT…NLNV), 304 to 333 (YGRT…DVSS), and 337 to 366 (SGQT…KQML). Positions 369–502 (SSENSNPEQD…ILTNKQKQIE (134 aa)) are disordered. Composition is skewed to basic and acidic residues over residues 377 to 392 (QDLK…RLKV), 401 to 412 (MSQEPEINKDCD), and 466 to 481 (EEYH…KQLS). Residues 482 to 498 (EEQNTGISQDEILTNKQ) are compositionally biased toward polar residues. A coiled-coil region spans residues 494–583 (LTNKQKQIEV…LNEEALTKTN (90 aa)).

This sequence belongs to the POTE family. Expressed in prostate, ovary, testis, placenta and prostate cancer cell lines. Localizes to basal and terminal prostate epithelial cells.

It is found in the cell membrane. This is POTE ankyrin domain family member D (POTED) from Homo sapiens (Human).